The following is a 107-amino-acid chain: Phosphoribosyl-ATP pyrophosphatase (107 aa).

Belongs to the PRA-PH family.

The protein localises to the cytoplasm. It catalyses the reaction 1-(5-phospho-beta-D-ribosyl)-ATP + H2O = 1-(5-phospho-beta-D-ribosyl)-5'-AMP + diphosphate + H(+). The protein operates within amino-acid biosynthesis; L-histidine biosynthesis; L-histidine from 5-phospho-alpha-D-ribose 1-diphosphate: step 2/9. In Azoarcus sp. (strain BH72), this protein is Phosphoribosyl-ATP pyrophosphatase.